Reading from the N-terminus, the 91-residue chain is Cell division topological specificity factor (91 aa).

Belongs to the MinE family.

Functionally, prevents the cell division inhibition by proteins MinC and MinD at internal division sites while permitting inhibition at polar sites. This ensures cell division at the proper site by restricting the formation of a division septum at the midpoint of the long axis of the cell. The protein is Cell division topological specificity factor of Bradyrhizobium sp. (strain BTAi1 / ATCC BAA-1182).